Reading from the N-terminus, the 156-residue chain is Protein SprT (156 aa).

One can recognise a SprT-like domain in the interval 15–153; it reads NRYFNKHFTP…CKKCKEILVL (139 aa). Position 67 (His-67) interacts with Zn(2+). The active site involves Glu-68. His-71 provides a ligand contact to Zn(2+).

This sequence belongs to the SprT family. The cofactor is Zn(2+).

Its subcellular location is the cytoplasm. The protein is Protein SprT of Glaesserella parasuis serovar 5 (strain SH0165) (Haemophilus parasuis).